A 159-amino-acid chain; its full sequence is Ribosomal RNA large subunit methyltransferase H (159 aa).

S-adenosyl-L-methionine is bound by residues Leu76, Gly108, and Phe127–Met132.

It belongs to the RNA methyltransferase RlmH family. In terms of assembly, homodimer.

Its subcellular location is the cytoplasm. The catalysed reaction is pseudouridine(1915) in 23S rRNA + S-adenosyl-L-methionine = N(3)-methylpseudouridine(1915) in 23S rRNA + S-adenosyl-L-homocysteine + H(+). Functionally, specifically methylates the pseudouridine at position 1915 (m3Psi1915) in 23S rRNA. This Lacticaseibacillus casei (strain BL23) (Lactobacillus casei) protein is Ribosomal RNA large subunit methyltransferase H.